We begin with the raw amino-acid sequence, 343 residues long: S-adenosylmethionine:tRNA ribosyltransferase-isomerase (343 aa).

It belongs to the QueA family. As to quaternary structure, monomer.

The protein localises to the cytoplasm. It catalyses the reaction 7-aminomethyl-7-carbaguanosine(34) in tRNA + S-adenosyl-L-methionine = epoxyqueuosine(34) in tRNA + adenine + L-methionine + 2 H(+). It functions in the pathway tRNA modification; tRNA-queuosine biosynthesis. Functionally, transfers and isomerizes the ribose moiety from AdoMet to the 7-aminomethyl group of 7-deazaguanine (preQ1-tRNA) to give epoxyqueuosine (oQ-tRNA). This is S-adenosylmethionine:tRNA ribosyltransferase-isomerase from Syntrophotalea carbinolica (strain DSM 2380 / NBRC 103641 / GraBd1) (Pelobacter carbinolicus).